Consider the following 258-residue polypeptide: MSVEDTQPLITHLIELRKRLLNCIIAVIVIFLCLVYFANDIYHLVSAPLIKQLPQGSTMIATDVASPFFTPIKLTFMVSLILSAPVILYQVWAFIAPALYKHERRLVVPLLVSSSLLFYIGMAFAYFVVFPLAFGFLANTAPEGVQVSTDIASYLSFVMALFMAFGVSFEVPVAIVLLCWMGITSPEDLRKKRPYVLVGAFVVGMLLTPPDVFSQTLLAIPMYCLFEIGVFFSRFYVGKGRNREEENDAEAESEKTEE.

The Cytoplasmic segment spans residues 2-23; the sequence is SVEDTQPLITHLIELRKRLLNC. Residues 24-44 traverse the membrane as a helical segment; that stretch reads IIAVIVIFLCLVYFANDIYHL. The Periplasmic portion of the chain corresponds to 45–75; it reads VSAPLIKQLPQGSTMIATDVASPFFTPIKLT. A helical membrane pass occupies residues 76 to 96; sequence FMVSLILSAPVILYQVWAFIA. Topologically, residues 97–115 are cytoplasmic; that stretch reads PALYKHERRLVVPLLVSSS. Residues 116-136 traverse the membrane as a helical segment; it reads LLFYIGMAFAYFVVFPLAFGF. The Periplasmic segment spans residues 137 to 156; it reads LANTAPEGVQVSTDIASYLS. Residues 157 to 177 form a helical membrane-spanning segment; sequence FVMALFMAFGVSFEVPVAIVL. At 178 to 192 the chain is on the cytoplasmic side; that stretch reads LCWMGITSPEDLRKK. The helical transmembrane segment at 193–210 threads the bilayer; it reads RPYVLVGAFVVGMLLTPP. Position 211 (aspartate 211) is a topological domain, periplasmic. The helical transmembrane segment at 212 to 232 threads the bilayer; that stretch reads VFSQTLLAIPMYCLFEIGVFF. Topologically, residues 233 to 258 are cytoplasmic; that stretch reads SRFYVGKGRNREEENDAEAESEKTEE.

The protein belongs to the TatC family. As to quaternary structure, the Tat system comprises two distinct complexes: a TatABC complex, containing multiple copies of TatA, TatB and TatC subunits, and a separate TatA complex, containing only TatA subunits. Substrates initially bind to the TatABC complex, which probably triggers association of the separate TatA complex to form the active translocon. TatC can form a distinct, stable, multimeric complex independent of TatA and TatB. Each of TatA, TatB and TatC are able to interact in pairs without the third partner. Interacts with the signal sequence of DmsA and DmsD.

It localises to the cell inner membrane. Part of the twin-arginine translocation (Tat) system that transports large folded proteins containing a characteristic twin-arginine motif in their signal peptide across membranes. Together with TatB, TatC is part of a receptor directly interacting with Tat signal peptides. The polypeptide is Sec-independent protein translocase protein TatC (Escherichia coli (strain K12)).